The sequence spans 102 residues: MTGAELTGFMILAAGLFAAGVFGVLARRGILFQLIALEVALSGPALAFIAAGAYHGDAEGQGMFVLTLTLAAAEVAVGLALFLRIRRAKGSDDSDAVSGLKG.

Helical transmembrane passes span 6 to 26 (LTGF…GVLA), 30 to 50 (ILFQ…AFIA), and 63 to 83 (MFVL…ALFL).

This sequence belongs to the complex I subunit 4L family. As to quaternary structure, NDH-1 is composed of 14 different subunits. Subunits NuoA, H, J, K, L, M, N constitute the membrane sector of the complex.

The protein localises to the cell inner membrane. The catalysed reaction is a quinone + NADH + 5 H(+)(in) = a quinol + NAD(+) + 4 H(+)(out). NDH-1 shuttles electrons from NADH, via FMN and iron-sulfur (Fe-S) centers, to quinones in the respiratory chain. The immediate electron acceptor for the enzyme in this species is believed to be ubiquinone. Couples the redox reaction to proton translocation (for every two electrons transferred, four hydrogen ions are translocated across the cytoplasmic membrane), and thus conserves the redox energy in a proton gradient. The chain is NADH-quinone oxidoreductase subunit K from Rhodopseudomonas palustris (strain BisA53).